Consider the following 199-residue polypeptide: N-(5'-phosphoribosyl)anthranilate isomerase (199 aa).

This sequence belongs to the TrpF family.

The catalysed reaction is N-(5-phospho-beta-D-ribosyl)anthranilate = 1-(2-carboxyphenylamino)-1-deoxy-D-ribulose 5-phosphate. The protein operates within amino-acid biosynthesis; L-tryptophan biosynthesis; L-tryptophan from chorismate: step 3/5. The sequence is that of N-(5'-phosphoribosyl)anthranilate isomerase from Clostridium kluyveri (strain NBRC 12016).